The primary structure comprises 306 residues: 17-beta-hydroxysteroid dehydrogenase type 3 (306 aa).

44-73 (GQWAVITGAGDGIGKAYSFELARHGLNVVL) provides a ligand contact to NADP(+). Residue S181 participates in substrate binding. The Proton acceptor role is filled by Y194.

Belongs to the short-chain dehydrogenases/reductases (SDR) family. 17-beta-HSD 3 subfamily.

The protein localises to the endoplasmic reticulum. It catalyses the reaction a 17beta-hydroxy steroid + NADP(+) = a 17-oxo steroid + NADPH + H(+). It carries out the reaction testosterone + NADP(+) = androst-4-ene-3,17-dione + NADPH + H(+). The enzyme catalyses 17beta-estradiol + NADP(+) = estrone + NADPH + H(+). The catalysed reaction is 3beta-hydroxyandrost-5-en-17-one + NADPH + H(+) = androst-5-en-3beta,17beta-diol + NADP(+). It catalyses the reaction 17beta-hydroxy-5alpha-androstan-3-one + NADP(+) = 5alpha-androstan-3,17-dione + NADPH + H(+). It carries out the reaction androsterone + NADPH + H(+) = 5alpha-androstane-3alpha,17beta-diol + NADP(+). The enzyme catalyses 3beta-hydroxy-5alpha-androstan-17-one + NADPH + H(+) = 5alpha-androstane-3beta,17beta-diol + NADP(+). The catalysed reaction is androst-4-ene-3,11,17-trione + NADPH + H(+) = 17beta-hydroxyandrost-4-ene-3,11-dione + NADP(+). It catalyses the reaction 11beta-hydroxyandrost-4-ene-3,17-dione + NADPH + H(+) = 11beta,17beta-dihydroxyandrost-4-ene-3-one + NADP(+). It functions in the pathway hormone biosynthesis; testosterone biosynthesis. It participates in steroid metabolism. Functionally, catalyzes the conversion of 17-oxosteroids to 17beta-hydroxysteroids. Favors the reduction of androstenedione to testosterone. Testosterone is the key androgen driving male development and function. Uses NADPH while the two other EDH17B enzymes use NADH. Androgens such as epiandrosterone, dehydroepiandrosterone, androsterone and androstanedione are accepted as substrates and reduced at C-17. Can reduce 11-ketoandrostenedione as well as 11beta-hydroxyandrostenedione at C-17 to the respective testosterone forms. Plays a role in the rate-limiting-step for the maximum level of testosterone production by the testis but does not affect basal testosterone production. The protein is 17-beta-hydroxysteroid dehydrogenase type 3 of Rattus norvegicus (Rat).